The primary structure comprises 94 residues: Pyrimidine/purine nucleoside phosphorylase (94 aa).

It belongs to the nucleoside phosphorylase PpnP family.

The enzyme catalyses a purine D-ribonucleoside + phosphate = a purine nucleobase + alpha-D-ribose 1-phosphate. It catalyses the reaction adenosine + phosphate = alpha-D-ribose 1-phosphate + adenine. It carries out the reaction cytidine + phosphate = cytosine + alpha-D-ribose 1-phosphate. The catalysed reaction is guanosine + phosphate = alpha-D-ribose 1-phosphate + guanine. The enzyme catalyses inosine + phosphate = alpha-D-ribose 1-phosphate + hypoxanthine. It catalyses the reaction thymidine + phosphate = 2-deoxy-alpha-D-ribose 1-phosphate + thymine. It carries out the reaction uridine + phosphate = alpha-D-ribose 1-phosphate + uracil. The catalysed reaction is xanthosine + phosphate = alpha-D-ribose 1-phosphate + xanthine. In terms of biological role, catalyzes the phosphorolysis of diverse nucleosides, yielding D-ribose 1-phosphate and the respective free bases. Can use uridine, adenosine, guanosine, cytidine, thymidine, inosine and xanthosine as substrates. Also catalyzes the reverse reactions. This Pseudomonas putida (strain ATCC 700007 / DSM 6899 / JCM 31910 / BCRC 17059 / LMG 24140 / F1) protein is Pyrimidine/purine nucleoside phosphorylase.